Reading from the N-terminus, the 115-residue chain is Envelope glycoprotein N (115 aa).

An N-terminal signal peptide occupies residues 1 to 27; sequence MWLLRPAGSNFIVALIVLACAGPLTCS. Residues 28–77 are Virion surface-facing; that stretch reads AQLDAGILNPWGSAGHNDAVMPGMFANSESDERFYSPHCSSRGLPLVNES. The helical transmembrane segment at 78–98 threads the bilayer; that stretch reads MASVIFFLSLAMVCVAIVAIL. Over 99–115 the chain is Intravirion; the sequence is YNCCFNSFKNSVINSRW.

This sequence belongs to the herpesviridae glycoprotein N family. As to quaternary structure, interacts (via N-terminus) with gM (via N-terminus). The gM-gN heterodimer forms the gCII complex.

Its subcellular location is the virion membrane. The protein localises to the host membrane. It is found in the host Golgi apparatus. It localises to the host trans-Golgi network. Its function is as follows. Envelope glycoprotein necessary for proper maturation of gM and modulation of its membrane fusion activity. Also plays a critical role in virion morphogenesis. This chain is Envelope glycoprotein N, found in Psittacid herpesvirus 1 (isolate Amazon parrot/-/97-0001/1997) (PsHV-1).